The following is a 107-amino-acid chain: Basic phospholipase A2 sphenotoxin subunit B (107 aa).

Residues tyrosine 27, glycine 29, and glycine 31 each contribute to the Ca(2+) site. 5 disulfide bridges follow: cysteine 28–cysteine 44, cysteine 43–cysteine 91, cysteine 50–cysteine 88, cysteine 57–cysteine 81, and cysteine 75–cysteine 86. Residue histidine 47 is part of the active site. Aspartate 48 contacts Ca(2+). The active site involves aspartate 89.

It belongs to the phospholipase A2 family. Group II subfamily. D49 sub-subfamily. In terms of assembly, heterodimer of A and B chains; non-covalently linked. The acidic protein (B chain) has phospholipase A2 activity and the A chain weakly inhibits the B chain enzymatic activity but potentiates its lethal potency. As to expression, expressed by the venom gland.

The protein resides in the secreted. It carries out the reaction a 1,2-diacyl-sn-glycero-3-phosphocholine + H2O = a 1-acyl-sn-glycero-3-phosphocholine + a fatty acid + H(+). In terms of biological role, heterodimer A-B: Sphenotoxin is a potent neurotoxin that possesses phospholipase A2 (PLA2) activity. It consists of a non-covalent association of a basic PLA2 subunit B with a non-enzymatic subunit A. Its function is as follows. Monomer B: Not found in vivo. In vitro, potent neurotoxin that possesses phospholipase A2 (PLA2) activity and exerts a lethal action by blocking neuromuscular transmission. Induces paralysis of the hind legs and neuromuscular blockade in mouse phrenic nerve-diaphragm preparations. PLA2 catalyzes the calcium-dependent hydrolysis of the 2-acyl groups in 3-sn-phosphoglycerides. In Ophryacus sphenophrys (Broad-horned pitviper), this protein is Basic phospholipase A2 sphenotoxin subunit B.